A 400-amino-acid polypeptide reads, in one-letter code: tRNA-specific adenosine deaminase 1 (400 aa).

One can recognise an A to I editase domain in the interval 76-400; it reads SIATGVKALP…WIPTRTDDVK (325 aa). Residue histidine 101 coordinates Zn(2+). Glutamate 103 functions as the Proton donor in the catalytic mechanism. Arginine 108 contacts 1D-myo-inositol hexakisphosphate. Zn(2+) contacts are provided by cysteine 157 and cysteine 223. The 1D-myo-inositol hexakisphosphate site is built by lysine 226, arginine 232, lysine 369, and arginine 375.

The protein belongs to the ADAT1 family. The cofactor is 1D-myo-inositol hexakisphosphate. Requires Zn(2+) as cofactor.

It catalyses the reaction adenosine(37) in tRNA(Ala) + H2O + H(+) = inosine(37) in tRNA(Ala) + NH4(+). Deaminates adenosine-37 to inosine in tRNA-Ala. This is tRNA-specific adenosine deaminase 1 (TAD1) from Saccharomyces cerevisiae (strain ATCC 204508 / S288c) (Baker's yeast).